Reading from the N-terminus, the 211-residue chain is Protein-L-isoaspartate O-methyltransferase (211 aa).

Residue Ser-62 is part of the active site.

Belongs to the methyltransferase superfamily. L-isoaspartyl/D-aspartyl protein methyltransferase family.

Its subcellular location is the cytoplasm. It carries out the reaction [protein]-L-isoaspartate + S-adenosyl-L-methionine = [protein]-L-isoaspartate alpha-methyl ester + S-adenosyl-L-homocysteine. Catalyzes the methyl esterification of L-isoaspartyl residues in peptides and proteins that result from spontaneous decomposition of normal L-aspartyl and L-asparaginyl residues. It plays a role in the repair and/or degradation of damaged proteins. The sequence is that of Protein-L-isoaspartate O-methyltransferase from Shewanella putrefaciens (strain CN-32 / ATCC BAA-453).